A 152-amino-acid chain; its full sequence is Transcriptional regulator MraZ (152 aa).

SpoVT-AbrB domains are found at residues 5 to 52 (ASAI…PIQE) and 81 to 124 (AHEC…DEAA).

It belongs to the MraZ family. As to quaternary structure, forms oligomers.

It is found in the cytoplasm. The protein resides in the nucleoid. The protein is Transcriptional regulator MraZ of Shewanella halifaxensis (strain HAW-EB4).